The sequence spans 144 residues: VSANDIKNVQDTWGKLYDQWDAVHASKFYNKLFKDSEDISEAFVKAGTGSGIAMKRQALVFGAILQEFVANLNDPTALTLKIKGLCATHKTRGITNMELFAFALADLVAYMGTTISFTAAQKASWTAVNDVILHQMSSYFATVA.

The 141-residue stretch at Val1–Ala141 folds into the Globin domain. A heme b-binding site is contributed by His89.

This sequence belongs to the globin family. As to quaternary structure, homodimer.

This chain is Globin-1, found in Phreagena soyoae (Deep-sea cold-seep clam).